Here is a 546-residue protein sequence, read N- to C-terminus: Oncoprotein-induced transcript 3 protein (546 aa).

Residues 1–16 (MPLSLLLACLFTTVTL) form the signal peptide. N-linked (GlcNAc...) asparagine glycosylation is found at Asn-89 and Asn-116. Residues 182–222 (DENECEHNNGGCSEICVNLKNSHRCACGVGRVLRSDGKTCE) enclose the EGF-like; calcium-binding domain. Disulfide bonds link Cys-186-Cys-197, Cys-193-Cys-206, and Cys-208-Cys-221. A ZP domain is found at 261-516 (TCQVPVLCKS…SRCAQGCHRR (256 aa)). An N-linked (GlcNAc...) asparagine glycan is attached at Asn-299. Positions 524–546 (DEDSAGLQSQTLTGGPISIDWEE) are disordered.

It is found in the nucleus envelope. May be involved in hepatocellular function and development. The chain is Oncoprotein-induced transcript 3 protein (Oit3) from Rattus norvegicus (Rat).